The primary structure comprises 55 residues: Large ribosomal subunit protein bL33 (55 aa).

It belongs to the bacterial ribosomal protein bL33 family.

This chain is Large ribosomal subunit protein bL33, found in Chelativorans sp. (strain BNC1).